Reading from the N-terminus, the 332-residue chain is Ribosomal RNA small subunit methyltransferase C (332 aa).

It belongs to the methyltransferase superfamily. RsmC family. As to quaternary structure, monomer.

The protein resides in the cytoplasm. The enzyme catalyses guanosine(1207) in 16S rRNA + S-adenosyl-L-methionine = N(2)-methylguanosine(1207) in 16S rRNA + S-adenosyl-L-homocysteine + H(+). Its function is as follows. Specifically methylates the guanine in position 1207 of 16S rRNA in the 30S particle. The chain is Ribosomal RNA small subunit methyltransferase C from Pseudomonas paraeruginosa (strain DSM 24068 / PA7) (Pseudomonas aeruginosa (strain PA7)).